The sequence spans 446 residues: Keratin, type I cytoskeletal 25 (446 aa).

The interval 1 to 74 is head; that stretch reads MSLRLSSGSR…VNEGGLLSGN (74 aa). The segment at 75–110 is coil 1A; that stretch reads EKVTMQNLNDRLASYLDNVQALQEANADLEQKIKGW. An IF rod domain is found at 75–390; sequence EKVTMQNLND…LLIGGDEGAC (316 aa). Residues 111–132 are linker 1; that stretch reads YEKFGPGSCRGLDHDYSRYFPI. The interval 133-224 is coil 1B; it reads IDDLKNQIIT…KNHKEEMQAL (92 aa). A linker 12 region spans residues 225–247; that stretch reads QCAAGGNVNVEMNAAPGVDLTVL. The segment at 248–386 is coil 2; sequence LNNMRAEYEA…ETYCLLIGGD (139 aa). The tail stretch occupies residues 387 to 446; the sequence is EGACKSSSYKSKDYGSGNAGNQIKDPVKAIVVKKVLEEVDQRSKILTTRLHSLEEKSQSN. Residue Ser438 is modified to Phosphoserine.

The protein belongs to the intermediate filament family. Heterodimer of a type I and a type II keratin. Heterodimer with type II keratin KRT5 leading to the formation of keratin intermediate filament (KIF) network. Interacts with KRT6A to form filaments.

It is found in the cytoplasm. In terms of biological role, essential for the proper assembly of type I and type II keratin protein complexes and formation of keratin intermediate filaments in the inner root sheath (irs). Plays a role in the cytoskeleton organization. This Mus musculus (Mouse) protein is Keratin, type I cytoskeletal 25.